A 397-amino-acid chain; its full sequence is Argininosuccinate synthase (397 aa).

ATP is bound at residue 9–17; that stretch reads AYSGGLDTS. Tyr-86 lines the L-citrulline pocket. ATP is bound at residue Gly-116. Thr-118, Asn-122, and Asp-123 together coordinate L-aspartate. Residue Asn-122 coordinates L-citrulline. 4 residues coordinate L-citrulline: Arg-126, Ser-174, Glu-259, and Tyr-271.

It belongs to the argininosuccinate synthase family. Type 1 subfamily. As to quaternary structure, homotetramer.

The protein resides in the cytoplasm. It catalyses the reaction L-citrulline + L-aspartate + ATP = 2-(N(omega)-L-arginino)succinate + AMP + diphosphate + H(+). The protein operates within amino-acid biosynthesis; L-arginine biosynthesis; L-arginine from L-ornithine and carbamoyl phosphate: step 2/3. This chain is Argininosuccinate synthase, found in Lactococcus lactis subsp. cremoris (strain SK11).